We begin with the raw amino-acid sequence, 505 residues long: Maturase K (505 aa).

This sequence belongs to the intron maturase 2 family. MatK subfamily.

Its subcellular location is the plastid. The protein localises to the chloroplast. Usually encoded in the trnK tRNA gene intron. Probably assists in splicing its own and other chloroplast group II introns. This chain is Maturase K, found in Ficus carica (Common fig).